The primary structure comprises 329 residues: L-lactate dehydrogenase (329 aa).

NAD(+)-binding positions include Val-18, Glu-39, Lys-46, Tyr-71, and 85–86 (GA). Residues Gln-88 and Arg-94 each coordinate substrate. NAD(+) is bound by residues Ser-107, 124–126 (AAN), and Ser-149. 126-129 (NPVD) provides a ligand contact to substrate. Position 154 to 157 (154 to 157 (DSAR)) interacts with substrate. Positions 159 and 174 each coordinate beta-D-fructose 1,6-bisphosphate. Catalysis depends on His-181, which acts as the Proton acceptor. Tyr-226 carries the phosphotyrosine modification. A substrate-binding site is contributed by Thr-235.

Belongs to the LDH/MDH superfamily. LDH family. Homotetramer.

The protein localises to the cytoplasm. The enzyme catalyses (S)-lactate + NAD(+) = pyruvate + NADH + H(+). It participates in fermentation; pyruvate fermentation to lactate; (S)-lactate from pyruvate: step 1/1. With respect to regulation, allosterically activated by fructose 1,6-bisphosphate (FBP). Functionally, catalyzes the conversion of lactate to pyruvate. This chain is L-lactate dehydrogenase, found in Streptococcus equinus (Streptococcus bovis).